We begin with the raw amino-acid sequence, 511 residues long: Ribose import ATP-binding protein RbsA (511 aa).

ABC transporter domains lie at 7-242 and 256-500; these read LQIS…VGRE and CSTT…SGTQ. Position 39–46 (39–46) interacts with ATP; sequence GENGAGKS.

This sequence belongs to the ABC transporter superfamily. Ribose importer (TC 3.A.1.2.1) family. In terms of assembly, the complex is composed of an ATP-binding protein (RbsA), two transmembrane proteins (RbsC) and a solute-binding protein (RbsB).

The protein resides in the cell inner membrane. The enzyme catalyses D-ribose(out) + ATP + H2O = D-ribose(in) + ADP + phosphate + H(+). In terms of biological role, part of the ABC transporter complex RbsABC involved in ribose import. Responsible for energy coupling to the transport system. The protein is Ribose import ATP-binding protein RbsA of Ruegeria sp. (strain TM1040) (Silicibacter sp.).